The sequence spans 306 residues: Homoserine kinase (306 aa).

Residue 95–105 (PHSRGLGSSAA) participates in ATP binding.

This sequence belongs to the GHMP kinase family. Homoserine kinase subfamily.

It localises to the cytoplasm. It carries out the reaction L-homoserine + ATP = O-phospho-L-homoserine + ADP + H(+). The protein operates within amino-acid biosynthesis; L-threonine biosynthesis; L-threonine from L-aspartate: step 4/5. Functionally, catalyzes the ATP-dependent phosphorylation of L-homoserine to L-homoserine phosphate. The protein is Homoserine kinase of Mycobacteroides abscessus (strain ATCC 19977 / DSM 44196 / CCUG 20993 / CIP 104536 / JCM 13569 / NCTC 13031 / TMC 1543 / L948) (Mycobacterium abscessus).